The following is a 512-amino-acid chain: Eukaryotic translation initiation factor 3 subunit L (512 aa).

In terms of domain architecture, PCI spans 291–477 (DAFRLFESIL…GERQFTDSVD (187 aa)).

This sequence belongs to the eIF-3 subunit L family. Component of the eukaryotic translation initiation factor 3 (eIF-3) complex.

The protein resides in the cytoplasm. Its function is as follows. Component of the eukaryotic translation initiation factor 3 (eIF-3) complex, which is involved in protein synthesis of a specialized repertoire of mRNAs and, together with other initiation factors, stimulates binding of mRNA and methionyl-tRNAi to the 40S ribosome. The eIF-3 complex specifically targets and initiates translation of a subset of mRNAs involved in cell proliferation. This chain is Eukaryotic translation initiation factor 3 subunit L, found in Monosiga brevicollis (Choanoflagellate).